The sequence spans 323 residues: Sphingolipid delta(4)-desaturase DES1 (323 aa).

Gly2 carries N-myristoyl glycine lipidation. 2 consecutive transmembrane segments (helical) span residues 41–61 and 68–88; these read HNLIWIVAMMLLVQLASFYLV and WVIFWSYVFGSCLNHSMTLAI. The short motif at 89 to 93 is the Histidine box-1 element; the sequence is HEISH. A helical membrane pass occupies residues 104-124; that stretch reads WNRWFGMFANLSLGVPYSISF. Residues 128 to 132 carry the Histidine box-2 motif; the sequence is HMDHH. 3 consecutive transmembrane segments (helical) span residues 152–172, 184–204, and 209–229; these read FFCTTFRKFVWVILQPLFYAF, YLEIINTVIQITFDIIIYYVF, and LVYMLAATLLGLGLHPISGHF. Residues 259–263 carry the Histidine box-3 motif; that stretch reads HNEHH. Ser307 is subject to Phosphoserine.

It belongs to the fatty acid desaturase type 1 family. DEGS subfamily. In terms of assembly, interacts with RLBP1; the interaction increases synthesis of chromophore-precursors by DEGS1. In terms of processing, myristoylation can target the enzyme to the mitochondria leading to an increase in ceramide levels. As to expression, detected in testis. Detected in pachytene spermatocytes and round spermatids. Expressed in retina and retinal pigment epithelium by Mueller cells (at protein level).

The protein localises to the mitochondrion membrane. Its subcellular location is the endoplasmic reticulum membrane. The catalysed reaction is an N-acylsphinganine + 2 Fe(II)-[cytochrome b5] + O2 + 2 H(+) = an N-acylsphing-4-enine + 2 Fe(III)-[cytochrome b5] + 2 H2O. It carries out the reaction all-trans-retinol = 11-cis-retinol. The enzyme catalyses all-trans-retinol = 9-cis-retinol. It catalyses the reaction all-trans-retinol = 13-cis-retinol. The catalysed reaction is 11-cis-retinol = 13-cis-retinol. It carries out the reaction 11-cis-retinol = 9-cis-retinol. Has sphingolipid-delta-4-desaturase activity. Converts D-erythro-sphinganine to D-erythro-sphingosine (E-sphing-4-enine). Catalyzes the equilibrium isomerization of retinols. This chain is Sphingolipid delta(4)-desaturase DES1, found in Mus musculus (Mouse).